The following is a 102-amino-acid chain: Small ribosomal subunit protein uS10 (102 aa).

It belongs to the universal ribosomal protein uS10 family. In terms of assembly, part of the 30S ribosomal subunit.

In terms of biological role, involved in the binding of tRNA to the ribosomes. This is Small ribosomal subunit protein uS10 from Symbiobacterium thermophilum (strain DSM 24528 / JCM 14929 / IAM 14863 / T).